A 63-amino-acid chain; its full sequence is Lantibiotic mutacin-1140 (63 aa).

A propeptide spanning residues 1–41 (MSNTQLLEVLGTETFDVQEDLFAFDTTDTTIVASNDDPDTR) is cleaved from the precursor. The segment at residues 44–48 (SWSLC) is a cross-link (lanthionine (Ser-Cys)). Ser-46 is modified (2,3-didehydroalanine (Ser)). Positions 49-52 (TPGC) form a cross-link, beta-methyllanthionine (Thr-Cys). Thr-55 is modified (2,3-didehydrobutyrine). Residues 57–62 (SFNSYC) constitute a cross-link (lanthionine (Ser-Cys)). The segment at residues 60–63 (SYCC) is a cross-link (S-(2-aminovinyl)-D-cysteine (Ser-Cys)).

The protein belongs to the type A lantibiotic family. In terms of processing, maturation of lantibiotics involves the enzymatic conversion of Thr, and Ser into dehydrated AA and the formation of thioether bonds with cysteine. The C-terminal lanthionine undergoes decarboxylation. This is followed by membrane translocation and cleavage of the modified precursor. Post-translationally, the structure of the 2,3-didehydrobutyrine is not discussed in PubMed:11082191.

Its function is as follows. Lanthionine-containing peptide antibiotic (lantibiotic) active on Gram-positive bacteria. The bactericidal activity of lantibiotics is based on depolarization of energized bacterial cytoplasmic membranes, initiated by the formation of aqueous transmembrane pores. In Streptococcus mutans, this protein is Lantibiotic mutacin-1140 (lanA).